The sequence spans 213 residues: Motile sperm domain-containing protein 1 (213 aa).

Positions 16–143 constitute an MSP domain; the sequence is PVFVFPTELI…KEHLTESVFF (128 aa). A run of 2 helical transmembrane segments spans residues 159 to 179 and 191 to 211; these read SLLT…PTLG and LSVN…MAIL. The Nuclear export signal motif lies at 205 to 208; it reads LITM.

As to expression, widely expressed. Shows highest expression in ribs, and slightly lower levels of expression in heart, kidney, muscle, thymus, calvariae and lung. Also detected at low levels in spleen and liver.

It is found in the endoplasmic reticulum membrane. It localises to the golgi apparatus membrane. Its function is as follows. Plays a role in differentiation and/or proliferation of mesenchymal stem cells. Proposed to be involved in epithelial-to-mesenchymal transition (EMT). However, another study suggests that it is not required for EMT or stem cell self-renewal and acts during later stages of differentiation. The protein is Motile sperm domain-containing protein 1 (Mospd1) of Mus musculus (Mouse).